A 95-amino-acid polypeptide reads, in one-letter code: Cell division topological specificity factor (95 aa).

Belongs to the MinE family.

Prevents the cell division inhibition by proteins MinC and MinD at internal division sites while permitting inhibition at polar sites. This ensures cell division at the proper site by restricting the formation of a division septum at the midpoint of the long axis of the cell. This chain is Cell division topological specificity factor, found in Microcystis aeruginosa (strain NIES-843 / IAM M-2473).